A 141-amino-acid polypeptide reads, in one-letter code: Large ribosomal subunit protein bL17 (141 aa).

Belongs to the bacterial ribosomal protein bL17 family. As to quaternary structure, part of the 50S ribosomal subunit. Contacts protein L32.

The sequence is that of Large ribosomal subunit protein bL17 from Maridesulfovibrio salexigens (strain ATCC 14822 / DSM 2638 / NCIMB 8403 / VKM B-1763) (Desulfovibrio salexigens).